Reading from the N-terminus, the 132-residue chain is Small ribosomal subunit protein uS11 (132 aa).

It belongs to the universal ribosomal protein uS11 family. Part of the 30S ribosomal subunit. Interacts with proteins S7 and S18. Binds to IF-3.

Its function is as follows. Located on the platform of the 30S subunit, it bridges several disparate RNA helices of the 16S rRNA. Forms part of the Shine-Dalgarno cleft in the 70S ribosome. In Chlamydia muridarum (strain MoPn / Nigg), this protein is Small ribosomal subunit protein uS11.